The following is a 145-amino-acid chain: Allergen Sin a 1 (145 aa).

The tract at residues 34-62 is disordered; the sequence is SGSGPSWTLDDEFDFEDDMENPQGPQQRP. Residues 40 to 54 constitute a propeptide that is removed on maturation; that stretch reads WTLDDEFDFEDDMEN. Residues 42–53 are compositionally biased toward acidic residues; it reads LDDEFDFEDDME.

Belongs to the 2S seed storage albumins family. The protein consists of two chains linked by disulfide bonds.

This is a 2S seed storage protein. This is Allergen Sin a 1 from Sinapis alba (White mustard).